Here is a 273-residue protein sequence, read N- to C-terminus: Ribosomal RNA small subunit methyltransferase A (273 aa).

Residues Asn18, Leu20, Gly45, Glu66, Asp91, and Asn113 each contribute to the S-adenosyl-L-methionine site.

Belongs to the class I-like SAM-binding methyltransferase superfamily. rRNA adenine N(6)-methyltransferase family. RsmA subfamily.

The protein localises to the cytoplasm. It catalyses the reaction adenosine(1518)/adenosine(1519) in 16S rRNA + 4 S-adenosyl-L-methionine = N(6)-dimethyladenosine(1518)/N(6)-dimethyladenosine(1519) in 16S rRNA + 4 S-adenosyl-L-homocysteine + 4 H(+). Specifically dimethylates two adjacent adenosines (A1518 and A1519) in the loop of a conserved hairpin near the 3'-end of 16S rRNA in the 30S particle. May play a critical role in biogenesis of 30S subunits. The sequence is that of Ribosomal RNA small subunit methyltransferase A from Citrobacter koseri (strain ATCC BAA-895 / CDC 4225-83 / SGSC4696).